Consider the following 321-residue polypeptide: Geranylgeranyl transferase type-2 subunit beta 1 (321 aa).

Ser2 carries the N-acetylserine modification. PFTB repeat units lie at residues 14–55 (ADKH…DLLD), 62–103 (EEEV…ALFD), 110–151 (IGKV…SILK), 158–199 (VEKA…AITG), 206–247 (KDSL…IMID), and 254–296 (KAKL…SLLE). Geranylgeranyl diphosphate is bound by residues 184-186 (HAG) and 226-229 (RPEK). Positions 232 and 234 each coordinate Zn(2+). Geranylgeranyl diphosphate is bound at residue 235–238 (YSWW). Residue His284 coordinates Zn(2+).

This sequence belongs to the protein prenyltransferase subunit beta family. In terms of assembly, heterotrimer composed of the alpha subunit RGTA, the beta subunit RGTB and REP; within this trimer, RGTA and RGTB form the catalytic component, while REP mediates peptide substrate binding. Zn(2+) serves as cofactor. Mg(2+) is required as a cofactor.

It carries out the reaction geranylgeranyl diphosphate + L-cysteinyl-[protein] = S-geranylgeranyl-L-cysteinyl-[protein] + diphosphate. The enzymatic reaction requires the aid of the Rab escort protein REP. In terms of biological role, catalyzes the transfer of a geranylgeranyl moiety from geranylgeranyl diphosphate to both cysteines of Rab proteins with the C-terminal sequence -CCXX, CXXX, -XCCX and -XCXC, such as RABA1A, RABA2A, RABF2A and RABG2. Involved in the geranylgeranylation of RABA2A. In vitro, can prenylate PGGTI targets with the C-terminal sequence Cys-aliphatic-aliphatic-X (CaaX) with leucine in the terminal position. Substrates with the C-terminal sequence -CSIL such as ARAC11/ROP1 or GG2/AGG2 are prenylated independently of REP and when the beta subunit is associated with the alpha subunit RGTA1. Its function is as follows. Required for male fertility and root tip growth. This is Geranylgeranyl transferase type-2 subunit beta 1 from Arabidopsis thaliana (Mouse-ear cress).